A 271-amino-acid chain; its full sequence is 4-hydroxy-tetrahydrodipicolinate reductase (271 aa).

NAD(+) is bound by residues 10–15, E36, 100–102, and 124–127; these read GAGGRM, GTT, and SGNM. The active-site Proton donor/acceptor is the H157. Residue H158 participates in (S)-2,3,4,5-tetrahydrodipicolinate binding. Residue K161 is the Proton donor of the active site. Residue 167–168 participates in (S)-2,3,4,5-tetrahydrodipicolinate binding; it reads GT.

It belongs to the DapB family.

Its subcellular location is the cytoplasm. The enzyme catalyses (S)-2,3,4,5-tetrahydrodipicolinate + NAD(+) + H2O = (2S,4S)-4-hydroxy-2,3,4,5-tetrahydrodipicolinate + NADH + H(+). It catalyses the reaction (S)-2,3,4,5-tetrahydrodipicolinate + NADP(+) + H2O = (2S,4S)-4-hydroxy-2,3,4,5-tetrahydrodipicolinate + NADPH + H(+). It functions in the pathway amino-acid biosynthesis; L-lysine biosynthesis via DAP pathway; (S)-tetrahydrodipicolinate from L-aspartate: step 4/4. Functionally, catalyzes the conversion of 4-hydroxy-tetrahydrodipicolinate (HTPA) to tetrahydrodipicolinate. This is 4-hydroxy-tetrahydrodipicolinate reductase from Rhodopseudomonas palustris (strain BisB18).